The sequence spans 239 residues: BURP domain-containing protein 6 (239 aa).

Residues 1–19 form the signal peptide; the sequence is MPGAIRDLINPVSSAASAS. The region spanning 28–239 is the BURP domain; the sequence is FFLEKDLFPG…PQDDMLWVRN (212 aa).

As to expression, expressed in leaves and shoot.

This is BURP domain-containing protein 6 (BURP6) from Oryza sativa subsp. japonica (Rice).